A 258-amino-acid polypeptide reads, in one-letter code: UPF0246 protein YaaA (258 aa).

It belongs to the UPF0246 family.

This chain is UPF0246 protein YaaA, found in Escherichia coli O6:K15:H31 (strain 536 / UPEC).